Here is a 476-residue protein sequence, read N- to C-terminus: tRNA(Ile)-lysidine synthase (476 aa).

Ser26–Ser31 contacts ATP.

This sequence belongs to the tRNA(Ile)-lysidine synthase family.

Its subcellular location is the cytoplasm. It carries out the reaction cytidine(34) in tRNA(Ile2) + L-lysine + ATP = lysidine(34) in tRNA(Ile2) + AMP + diphosphate + H(+). Functionally, ligates lysine onto the cytidine present at position 34 of the AUA codon-specific tRNA(Ile) that contains the anticodon CAU, in an ATP-dependent manner. Cytidine is converted to lysidine, thus changing the amino acid specificity of the tRNA from methionine to isoleucine. This chain is tRNA(Ile)-lysidine synthase, found in Bartonella quintana (strain Toulouse) (Rochalimaea quintana).